The following is a 563-amino-acid chain: Benzaldehyde lyase (563 aa).

This sequence belongs to the TPP enzyme family. A metal cation serves as cofactor. Requires thiamine diphosphate as cofactor.

It carries out the reaction benzoin = 2 benzaldehyde. Cleavage of benzoin-anisoin acyloin linkage. In Pseudomonas fluorescens, this protein is Benzaldehyde lyase (bznB).